We begin with the raw amino-acid sequence, 250 residues long: Flavin-dependent thymidylate synthase (250 aa).

The ThyX domain occupies 7-233 (LRVQLIAKTE…PQVFSDFEIT (227 aa)). FAD is bound by residues serine 71, 95 to 97 (RHR), and glutamine 103. DUMP is bound by residues 92 to 95 (ELIR), 103 to 107 (QLSQR), and arginine 172. A ThyX motif motif is present at residues 95–105 (RHRHFSYSQLS). Residues 188–190 (NYR) and histidine 194 contribute to the FAD site. Arginine 199 contacts dUMP. Catalysis depends on arginine 199, which acts as the Involved in ionization of N3 of dUMP, leading to its activation.

It belongs to the thymidylate synthase ThyX family. Homotetramer. FAD is required as a cofactor.

It catalyses the reaction dUMP + (6R)-5,10-methylene-5,6,7,8-tetrahydrofolate + NADPH + H(+) = dTMP + (6S)-5,6,7,8-tetrahydrofolate + NADP(+). The protein operates within pyrimidine metabolism; dTTP biosynthesis. Catalyzes the reductive methylation of 2'-deoxyuridine-5'-monophosphate (dUMP) to 2'-deoxythymidine-5'-monophosphate (dTMP) while utilizing 5,10-methylenetetrahydrofolate (mTHF) as the methyl donor, and NADPH and FADH(2) as the reductant. In Mycolicibacterium gilvum (strain PYR-GCK) (Mycobacterium gilvum (strain PYR-GCK)), this protein is Flavin-dependent thymidylate synthase.